Consider the following 331-residue polypeptide: Nucleotide-binding protein SGR_5570 (331 aa).

Residues 1–43 (MTENTHETAPNTADTDTADFDTADTDRADGAADVSTNTPNETG) form a disordered region. 55-62 (GMSGAGRS) contacts ATP. 106–109 (DVRG) is a GTP binding site.

The protein belongs to the RapZ-like family.

Displays ATPase and GTPase activities. The protein is Nucleotide-binding protein SGR_5570 of Streptomyces griseus subsp. griseus (strain JCM 4626 / CBS 651.72 / NBRC 13350 / KCC S-0626 / ISP 5235).